The chain runs to 364 residues: 4-hydroxy-3-methylbut-2-en-1-yl diphosphate synthase (flavodoxin) (364 aa).

[4Fe-4S] cluster-binding residues include Cys-268, Cys-271, Cys-303, and Glu-310.

This sequence belongs to the IspG family. The cofactor is [4Fe-4S] cluster.

It carries out the reaction (2E)-4-hydroxy-3-methylbut-2-enyl diphosphate + oxidized [flavodoxin] + H2O + 2 H(+) = 2-C-methyl-D-erythritol 2,4-cyclic diphosphate + reduced [flavodoxin]. Its pathway is isoprenoid biosynthesis; isopentenyl diphosphate biosynthesis via DXP pathway; isopentenyl diphosphate from 1-deoxy-D-xylulose 5-phosphate: step 5/6. Converts 2C-methyl-D-erythritol 2,4-cyclodiphosphate (ME-2,4cPP) into 1-hydroxy-2-methyl-2-(E)-butenyl 4-diphosphate. This chain is 4-hydroxy-3-methylbut-2-en-1-yl diphosphate synthase (flavodoxin), found in Desulfotalea psychrophila (strain LSv54 / DSM 12343).